The sequence spans 160 residues: MSDQYKRTYPISWDQLHRDSKALAWRLLDKDFFKGIIAITRGGMVPAAIIARELDIHLIDTICISSYDWKEKKGEADILKGFDGDGEGWLLIDDLVDTGRTAEVVKNLIPKAHFATVYAKPSGRPLVDTFVTEVSQDTWILFPWDTESQFAAPLIGREQR.

5-phospho-alpha-D-ribose 1-diphosphate is bound by residues 41–42 (RG) and 93–101 (DDLVDTGRT). Position 94 (Asp94) interacts with Mg(2+). Guanine is bound by residues Asp97 and Ile140. Residues Asp97 and Ile140 each contribute to the xanthine site. GMP contacts are provided by residues 97–101 (DTGRT) and 139–140 (WI).

The protein belongs to the purine/pyrimidine phosphoribosyltransferase family. XGPT subfamily. In terms of assembly, homotetramer. It depends on Mg(2+) as a cofactor.

Its subcellular location is the cell inner membrane. It catalyses the reaction GMP + diphosphate = guanine + 5-phospho-alpha-D-ribose 1-diphosphate. It carries out the reaction XMP + diphosphate = xanthine + 5-phospho-alpha-D-ribose 1-diphosphate. The enzyme catalyses IMP + diphosphate = hypoxanthine + 5-phospho-alpha-D-ribose 1-diphosphate. It functions in the pathway purine metabolism; GMP biosynthesis via salvage pathway; GMP from guanine: step 1/1. Its pathway is purine metabolism; XMP biosynthesis via salvage pathway; XMP from xanthine: step 1/1. Purine salvage pathway enzyme that catalyzes the transfer of the ribosyl-5-phosphate group from 5-phospho-alpha-D-ribose 1-diphosphate (PRPP) to the N9 position of the 6-oxopurines guanine and xanthine to form the corresponding ribonucleotides GMP (guanosine 5'-monophosphate) and XMP (xanthosine 5'-monophosphate), with the release of PPi. To a lesser extent, also acts on hypoxanthine. The protein is Xanthine-guanine phosphoribosyltransferase of Desulfotalea psychrophila (strain LSv54 / DSM 12343).